Reading from the N-terminus, the 283-residue chain is Elongation factor Ts (283 aa).

The segment at T80–V83 is involved in Mg(2+) ion dislocation from EF-Tu.

Belongs to the EF-Ts family.

The protein localises to the cytoplasm. In terms of biological role, associates with the EF-Tu.GDP complex and induces the exchange of GDP to GTP. It remains bound to the aminoacyl-tRNA.EF-Tu.GTP complex up to the GTP hydrolysis stage on the ribosome. The sequence is that of Elongation factor Ts from Haemophilus influenzae (strain PittEE).